Consider the following 129-residue polypeptide: Glycine cleavage system H protein (129 aa).

The Lipoyl-binding domain occupies 24–106; sequence SYTVGISEHA…FGDGWFFRVM (83 aa). N6-lipoyllysine is present on K65.

Belongs to the GcvH family. As to quaternary structure, the glycine cleavage system is composed of four proteins: P, T, L and H. (R)-lipoate is required as a cofactor.

Its function is as follows. The glycine cleavage system catalyzes the degradation of glycine. The H protein shuttles the methylamine group of glycine from the P protein to the T protein. This is Glycine cleavage system H protein from Shewanella woodyi (strain ATCC 51908 / MS32).